Here is a 123-residue protein sequence, read N- to C-terminus: Small ribosomal subunit protein uS12 (123 aa).

Residue aspartate 89 is modified to 3-methylthioaspartic acid.

The protein belongs to the universal ribosomal protein uS12 family. As to quaternary structure, part of the 30S ribosomal subunit. Contacts proteins S8 and S17. May interact with IF1 in the 30S initiation complex.

With S4 and S5 plays an important role in translational accuracy. In terms of biological role, interacts with and stabilizes bases of the 16S rRNA that are involved in tRNA selection in the A site and with the mRNA backbone. Located at the interface of the 30S and 50S subunits, it traverses the body of the 30S subunit contacting proteins on the other side and probably holding the rRNA structure together. The combined cluster of proteins S8, S12 and S17 appears to hold together the shoulder and platform of the 30S subunit. The chain is Small ribosomal subunit protein uS12 from Maridesulfovibrio salexigens (strain ATCC 14822 / DSM 2638 / NCIMB 8403 / VKM B-1763) (Desulfovibrio salexigens).